A 1364-amino-acid chain; its full sequence is DNA-directed RNA polymerase subunit beta (1364 aa).

Belongs to the RNA polymerase beta chain family. In terms of assembly, the RNAP catalytic core consists of 2 alpha, 1 beta, 1 beta' and 1 omega subunit. When a sigma factor is associated with the core the holoenzyme is formed, which can initiate transcription.

It carries out the reaction RNA(n) + a ribonucleoside 5'-triphosphate = RNA(n+1) + diphosphate. Its function is as follows. DNA-dependent RNA polymerase catalyzes the transcription of DNA into RNA using the four ribonucleoside triphosphates as substrates. This chain is DNA-directed RNA polymerase subunit beta, found in Desulfatibacillum aliphaticivorans.